The following is a 1322-amino-acid chain: Ice nucleation protein InaA (1322 aa).

An octapeptide periodicity region spans residues 162–1281 (ATYGSTLSGT…LTAGENSVLI (1120 aa)). 4 stretches are compositionally biased toward polar residues: residues 271–302 (SLTAGYGSTQTAGEDSSLTAGYGSTQTAQKGS), 327–350 (TQTAGEESTQTAGYGSTQTAQKGS), 373–398 (GSTQTAGEDSSLTAGYGSTQTAQKGS), and 423–446 (TQTAGEESTQTAGYGSTQTAQKGS). Disordered regions lie at residues 271–303 (SLTAGYGSTQTAGEDSSLTAGYGSTQTAQKGSD), 327–358 (TQTAGEESTQTAGYGSTQTAQKGSDLTAGYGS), 372–399 (YGSTQTAGEDSSLTAGYGSTQTAQKGSD), and 423–448 (TQTAGEESTQTAGYGSTQTAQKGSDL).

This sequence belongs to the bacterial ice nucleation protein family.

It is found in the cell outer membrane. Functionally, ice nucleation proteins enable bacteria to nucleate crystallization in supercooled water. This is Ice nucleation protein InaA (inaA) from Pantoea ananas (Erwinia uredovora).